Here is a 432-residue protein sequence, read N- to C-terminus: Adenylosuccinate synthetase (432 aa).

GTP is bound by residues 12–18 and 40–42; these read GDEGKGK and GHT. The Proton acceptor role is filled by aspartate 13. Residues aspartate 13 and glycine 40 each contribute to the Mg(2+) site. IMP is bound by residues 13 to 16, 38 to 41, threonine 126, arginine 140, glutamine 219, threonine 234, and arginine 300; these read DEGK and NAGH. Histidine 41 functions as the Proton donor in the catalytic mechanism. 296 to 302 contacts substrate; the sequence is STTGRPR. GTP is bound by residues arginine 302, 328–330, and 410–412; these read KLD and STG.

This sequence belongs to the adenylosuccinate synthetase family. In terms of assembly, homodimer. Mg(2+) is required as a cofactor.

The protein localises to the cytoplasm. The catalysed reaction is IMP + L-aspartate + GTP = N(6)-(1,2-dicarboxyethyl)-AMP + GDP + phosphate + 2 H(+). It participates in purine metabolism; AMP biosynthesis via de novo pathway; AMP from IMP: step 1/2. Plays an important role in the de novo pathway of purine nucleotide biosynthesis. Catalyzes the first committed step in the biosynthesis of AMP from IMP. The protein is Adenylosuccinate synthetase of Aquifex aeolicus (strain VF5).